A 184-amino-acid polypeptide reads, in one-letter code: J-type co-chaperone JAC1, mitochondrial (184 aa).

Residues M1–F10 constitute a mitochondrion transit peptide. The 70-residue stretch at T13–L82 folds into the J domain. Positions H48–D50 match the HSP70 binding motif. The interaction with ISU1 stretch occupies residues D71 to H184.

This sequence belongs to the HscB family. Interacts with ISU1 and SSQ1.

Its subcellular location is the mitochondrion matrix. Functionally, co-chaperone required for the assembly of iron-sulfur (Fe/S) clusters in mitochondria. Stimulates the ATPase activity of its specialized Hsp70 chaperone partner SSQ1, to mediate the transfer of iron-sulfur clusters from ISU1 to GRX5. Binds to the substrate protein ISU1 and targets it to SSQ1. The sequence is that of J-type co-chaperone JAC1, mitochondrial from Saccharomyces cerevisiae (strain ATCC 204508 / S288c) (Baker's yeast).